We begin with the raw amino-acid sequence, 66 residues long: Sarcoplasmic/endoplasmic reticulum calcium ATPase regulator ARLN (66 aa).

Residue M1 is modified to N-acetylmethionine. The segment at 1 to 37 (MEVDAPGVDGRDGLRERRGFSEGGRQNFDVRPQSGAN) is disordered. A compositionally biased stretch (basic and acidic residues) spans 9 to 20 (DGRDGLRERRGF). The chain crosses the membrane as a helical span at residues 45-65 (WLDLWLFILFDVVVFLFVYFL).

In terms of assembly, homooligomer. Can also form heterooligomers with other sarcoplasmic/endoplasmic reticulum calcium ATPase (SERCA) regulators ERLN, PLN, SLN and STRIT1/DWORF. Monomer. Interacts as a monomer with ATP2A2/SERCA2; the interaction results in inhibition of ATP2A2 Ca(2+) affinity.

Its subcellular location is the endoplasmic reticulum membrane. Functionally, inhibits the activity of the calcium ATPases ATP2A2/SERCA2 and ATP2A3/SERCA3 by decreasing their apparent affinity for Ca(2+). This Homo sapiens (Human) protein is Sarcoplasmic/endoplasmic reticulum calcium ATPase regulator ARLN.